The sequence spans 157 residues: Phosphopantetheine adenylyltransferase (157 aa).

This sequence belongs to the eukaryotic CoaD family.

It is found in the cytoplasm. It catalyses the reaction (R)-4'-phosphopantetheine + ATP + H(+) = 3'-dephospho-CoA + diphosphate. The protein operates within cofactor biosynthesis; coenzyme A biosynthesis. In terms of biological role, reversibly transfers an adenylyl group from ATP to 4'-phosphopantetheine, yielding dephospho-CoA (dPCoA) and pyrophosphate. The sequence is that of Phosphopantetheine adenylyltransferase from Methanopyrus kandleri (strain AV19 / DSM 6324 / JCM 9639 / NBRC 100938).